A 93-amino-acid polypeptide reads, in one-letter code: Alpha-defensin 15 (93 aa).

The signal sequence occupies residues 1–19 (MKTLVLLSALVLLAFQVQA). Positions 20-58 (DPIQNTDEETKTEEQPGEDDQAVSVSFGDPEGSSLQEES) are excised as a propeptide. Positions 23-56 (QNTDEETKTEEQPGEDDQAVSVSFGDPEGSSLQE) are disordered. 3 cysteine pairs are disulfide-bonded: Cys64/Cys92, Cys66/Cys81, and Cys71/Cys91.

The protein belongs to the alpha-defensin family. In terms of tissue distribution, paneth cells of the small bowel.

Its subcellular location is the secreted. Functionally, probably contributes to the antimicrobial barrier function of the small bowel mucosa. This is Alpha-defensin 15 (Defa15) from Mus musculus (Mouse).